Here is a 179-residue protein sequence, read N- to C-terminus: Putative endogenous retrovirus group FC1 Env polyprotein (179 aa).

Positions 1-22 are cleaved as a signal peptide; the sequence is MARPSPLCLLLLLTLLPPIVPS. The segment at 23-179 is truncated surface protein; it reads NSLLTEPPFR…SKLRIFRTYV (157 aa). Asn69 carries N-linked (GlcNAc...) asparagine glycosylation.

It belongs to the gamma type-C retroviral envelope protein family. HERV class-I F(c)1 env subfamily.

The protein localises to the virion. Its function is as follows. Retroviral envelope proteins mediate receptor recognition and membrane fusion during early infection. Endogenous envelope proteins may have kept, lost or modified their original function during evolution. This Gorilla gorilla gorilla (Western lowland gorilla) protein is Putative endogenous retrovirus group FC1 Env polyprotein (ERVFC1).